The chain runs to 122 residues: Large ribosomal subunit protein uL14 (122 aa).

The protein belongs to the universal ribosomal protein uL14 family. As to quaternary structure, part of the 50S ribosomal subunit. Forms a cluster with proteins L3 and L19. In the 70S ribosome, L14 and L19 interact and together make contacts with the 16S rRNA in bridges B5 and B8.

Functionally, binds to 23S rRNA. Forms part of two intersubunit bridges in the 70S ribosome. This Mycoplasma capricolum subsp. capricolum (strain California kid / ATCC 27343 / NCTC 10154) protein is Large ribosomal subunit protein uL14.